Here is a 335-residue protein sequence, read N- to C-terminus: DNA-directed RNA polymerase subunit alpha (335 aa).

The tract at residues 1–233 (MVREKITVST…DLFIPFLHME (233 aa)) is alpha N-terminal domain (alpha-NTD). An alpha C-terminal domain (alpha-CTD) region spans residues 265–335 (KEIALKSIFI…KQLVIFLPKK (71 aa)).

Belongs to the RNA polymerase alpha chain family. In terms of assembly, in plastids the minimal PEP RNA polymerase catalytic core is composed of four subunits: alpha, beta, beta', and beta''. When a (nuclear-encoded) sigma factor is associated with the core the holoenzyme is formed, which can initiate transcription.

The protein localises to the plastid. The protein resides in the chloroplast. It catalyses the reaction RNA(n) + a ribonucleoside 5'-triphosphate = RNA(n+1) + diphosphate. In terms of biological role, DNA-dependent RNA polymerase catalyzes the transcription of DNA into RNA using the four ribonucleoside triphosphates as substrates. The polypeptide is DNA-directed RNA polymerase subunit alpha (Coffea arabica (Arabian coffee)).